The sequence spans 331 residues: 6-phosphogluconolactonase (331 aa).

This sequence belongs to the cycloisomerase 2 family.

It carries out the reaction 6-phospho-D-glucono-1,5-lactone + H2O = 6-phospho-D-gluconate + H(+). It functions in the pathway carbohydrate degradation; pentose phosphate pathway; D-ribulose 5-phosphate from D-glucose 6-phosphate (oxidative stage): step 2/3. In terms of biological role, catalyzes the hydrolysis of 6-phosphogluconolactone to 6-phosphogluconate. This chain is 6-phosphogluconolactonase, found in Salmonella paratyphi A (strain ATCC 9150 / SARB42).